The primary structure comprises 74 residues: UPF0248 protein MK0350 (74 aa).

The protein belongs to the UPF0248 family.

This is UPF0248 protein MK0350 from Methanopyrus kandleri (strain AV19 / DSM 6324 / JCM 9639 / NBRC 100938).